The sequence spans 213 residues: uncharacterized protein (213 aa).

This is an uncharacterized protein from Saccharomyces cerevisiae (strain ATCC 204508 / S288c) (Baker's yeast).